The following is an 83-amino-acid chain: uncharacterized protein (83 aa).

This is an uncharacterized protein from Synechocystis sp. (strain ATCC 27184 / PCC 6803 / Kazusa).